The sequence spans 368 residues: Probable dual-specificity RNA methyltransferase RlmN (368 aa).

Glutamate 109 acts as the Proton acceptor in catalysis. The 241-residue stretch at 115–355 folds into the Radical SAM core domain; it reads YPDRVTMCIS…VTIRDTRGQE (241 aa). Cysteine 122 and cysteine 360 are disulfide-bonded. [4Fe-4S] cluster is bound by residues cysteine 129, cysteine 133, and cysteine 136. S-adenosyl-L-methionine is bound by residues 184–185, serine 218, 241–243, and asparagine 317; these read GE and SLH. Catalysis depends on cysteine 360, which acts as the S-methylcysteine intermediate.

This sequence belongs to the radical SAM superfamily. RlmN family. It depends on [4Fe-4S] cluster as a cofactor.

The protein localises to the cytoplasm. The catalysed reaction is adenosine(2503) in 23S rRNA + 2 reduced [2Fe-2S]-[ferredoxin] + 2 S-adenosyl-L-methionine = 2-methyladenosine(2503) in 23S rRNA + 5'-deoxyadenosine + L-methionine + 2 oxidized [2Fe-2S]-[ferredoxin] + S-adenosyl-L-homocysteine. It carries out the reaction adenosine(37) in tRNA + 2 reduced [2Fe-2S]-[ferredoxin] + 2 S-adenosyl-L-methionine = 2-methyladenosine(37) in tRNA + 5'-deoxyadenosine + L-methionine + 2 oxidized [2Fe-2S]-[ferredoxin] + S-adenosyl-L-homocysteine. Functionally, specifically methylates position 2 of adenine 2503 in 23S rRNA and position 2 of adenine 37 in tRNAs. This Streptomyces coelicolor (strain ATCC BAA-471 / A3(2) / M145) protein is Probable dual-specificity RNA methyltransferase RlmN.